Reading from the N-terminus, the 489-residue chain is COX3 mRNA-specific translational activator PET494 (489 aa).

Its subcellular location is the mitochondrion inner membrane. In terms of biological role, required for the expression of the mitochondrial gene for cytochrome c oxidase subunit III (COX3). The sequence is that of COX3 mRNA-specific translational activator PET494 (PET494) from Saccharomyces cerevisiae (strain ATCC 204508 / S288c) (Baker's yeast).